The sequence spans 446 residues: Enolase 1 (446 aa).

Substrate contacts are provided by His-164 and Glu-173. The active-site Proton donor is the Glu-216. Mg(2+)-binding residues include Asp-251, Glu-302, and Asp-329. Substrate contacts are provided by Glu-302 and Asp-329. The active-site Proton acceptor is the Lys-354. Substrate-binding positions include 381-384 (SHRS) and Lys-405.

Belongs to the enolase family. In terms of assembly, homodimer. The cofactor is Mg(2+).

It localises to the cytoplasm. The enzyme catalyses (2R)-2-phosphoglycerate = phosphoenolpyruvate + H2O. The protein operates within carbohydrate degradation; glycolysis; pyruvate from D-glyceraldehyde 3-phosphate: step 4/5. The protein is Enolase 1 (ENO1) of Zea mays (Maize).